The following is a 356-amino-acid chain: S-adenosylmethionine:tRNA ribosyltransferase-isomerase (356 aa).

Belongs to the QueA family. In terms of assembly, monomer.

The protein localises to the cytoplasm. The catalysed reaction is 7-aminomethyl-7-carbaguanosine(34) in tRNA + S-adenosyl-L-methionine = epoxyqueuosine(34) in tRNA + adenine + L-methionine + 2 H(+). Its pathway is tRNA modification; tRNA-queuosine biosynthesis. Its function is as follows. Transfers and isomerizes the ribose moiety from AdoMet to the 7-aminomethyl group of 7-deazaguanine (preQ1-tRNA) to give epoxyqueuosine (oQ-tRNA). This is S-adenosylmethionine:tRNA ribosyltransferase-isomerase from Escherichia coli (strain UTI89 / UPEC).